The chain runs to 307 residues: Protein EI24 homolog (307 aa).

2 consecutive transmembrane segments (helical) span residues 53–73 (FIHC…IYLY) and 92–112 (MFTI…SIIA). Asn-135 is a glycosylation site (N-linked (GlcNAc...) asparagine). 4 helical membrane-spanning segments follow: residues 153–173 (LFGV…TNFI), 175–195 (FVII…ILRG), 225–245 (FFFP…LFII), and 260–280 (GILP…NVIL).

Belongs to the EI24 family.

The protein resides in the membrane. This Dictyostelium discoideum (Social amoeba) protein is Protein EI24 homolog.